We begin with the raw amino-acid sequence, 630 residues long: Probable potassium transport system protein Kup (630 aa).

12 helical membrane-spanning segments follow: residues 19 to 39 (GLIG…LYAV), 59 to 79 (LLSL…VLLI), 108 to 128 (WIIG…ATIT), 145 to 165 (PGLK…LFFV), 173 to 193 (VGGA…ALGL), 220 to 240 (LLAF…EALY), 255 to 275 (WLFF…ALVI), 284 to 304 (PFFF…ATIA), 345 to 365 (IYVP…VLGF), 374 to 394 (AYGI…AFVY), 405 to 425 (TVLV…SNVL), and 427 to 447 (VFDG…VMTT).

It belongs to the HAK/KUP transporter (TC 2.A.72) family.

Its subcellular location is the cell inner membrane. The catalysed reaction is K(+)(in) + H(+)(in) = K(+)(out) + H(+)(out). Its function is as follows. Transport of potassium into the cell. Likely operates as a K(+):H(+) symporter. This Acidiphilium cryptum (strain JF-5) protein is Probable potassium transport system protein Kup.